The following is a 282-amino-acid chain: Pantothenate synthetase (282 aa).

30-37 contributes to the ATP binding site; the sequence is MGNLHLGH. The Proton donor role is filled by His37. Gln61 is a binding site for (R)-pantoate. Gln61 provides a ligand contact to beta-alanine. 149-152 is an ATP binding site; that stretch reads GQKD. Gln155 serves as a coordination point for (R)-pantoate. ATP is bound by residues Ile178 and 186–189; that span reads MSSR.

This sequence belongs to the pantothenate synthetase family. Homodimer.

The protein resides in the cytoplasm. The catalysed reaction is (R)-pantoate + beta-alanine + ATP = (R)-pantothenate + AMP + diphosphate + H(+). It functions in the pathway cofactor biosynthesis; (R)-pantothenate biosynthesis; (R)-pantothenate from (R)-pantoate and beta-alanine: step 1/1. Its function is as follows. Catalyzes the condensation of pantoate with beta-alanine in an ATP-dependent reaction via a pantoyl-adenylate intermediate. This chain is Pantothenate synthetase, found in Shewanella piezotolerans (strain WP3 / JCM 13877).